Here is an 891-residue protein sequence, read N- to C-terminus: UPF0182 protein Glov_0814 (891 aa).

The next 7 membrane-spanning stretches (helical) occupy residues 6 to 26, 51 to 71, 102 to 122, 164 to 184, 202 to 222, 244 to 264, and 266 to 286; these read LTPILFALFIIVPALTYLLAY, GIGVLFGGLLFAFLVPNLLYA, IGVLIAAGIALFVGQFGALQW, FMLLATLLVTLLVYYIRGGIA, ILLALFSCVIAAGFYLEGFGL, TLTTLAFITPVAGLLLAFGLW, and GTWRLVLLPPIVVVAAYMIGM.

Belongs to the UPF0182 family.

Its subcellular location is the cell membrane. This Trichlorobacter lovleyi (strain ATCC BAA-1151 / DSM 17278 / SZ) (Geobacter lovleyi) protein is UPF0182 protein Glov_0814.